Reading from the N-terminus, the 555-residue chain is MSEAEARPTNFIRQIIDEDLASGKHTTVHTRFPPEPNGYLHIGHAKSICLNFGIAQDYQGQCNLRFDDTNPVKEDIEYVDSIKNDVEWLGFHWSGDIRYSSDYFDQLHAYAVELINKGLAYVDELTPEQIREYRGTLTAPGKNSPFRDRSVEENLALFEKMRTGGFEEGKACLRAKIDMASPFIVMRDPVLYRIKFAEHHQTGNKWCIYPMYDFTHCISDALEGITHSLCTLEFQDNRRLYDWVLDNITIPVHPRQYEFSRLNLEYTVMSKRKLNLLVTDKHVEGWDDPRMPTISGLRRRGYTAASIREFCKRIGVTKQDNTIEMASLESCIREDLNENAPRAMAVIDPVKLVIENYPQGESEMVTMPNHPNKLEMGSREVPFSGEIWIDRADFREEANKQYKRLVMGKEVRLRNAYVIKAERVEKDAEGNITTIFCTYDADTLSKDPADGRKVKGVIHWVSAAHALPIEIRLYDRLFSVPNPGAAEDFLSVINPESLVIKQGYGEPSLKAAVAGKAFQFEREGYFCLDSRYATADKLVFNRTVGLRDTWAKAGE.

Positions 34-44 match the 'HIGH' region motif; it reads PEPNGYLHIGH. ATP contacts are provided by residues 35–37 and 41–47; these read EPN and HIGHAKS. 2 residues coordinate L-glutamine: D67 and Y212. ATP contacts are provided by residues T231, 261–262, and 269–271; these read RL and MSK. The 'KMSKS' region motif lies at 268-272; it reads VMSKR. Residues 317-324 form an interaction with tRNA region; sequence TKQDNTIE.

The protein belongs to the class-I aminoacyl-tRNA synthetase family. As to quaternary structure, monomer.

It is found in the cytoplasm. The catalysed reaction is tRNA(Gln) + L-glutamine + ATP = L-glutaminyl-tRNA(Gln) + AMP + diphosphate. The protein is Glutamine--tRNA ligase of Salmonella paratyphi B (strain ATCC BAA-1250 / SPB7).